Reading from the N-terminus, the 162-residue chain is Phosphopantetheine adenylyltransferase (162 aa).

Residue serine 9 coordinates substrate. Residues 9–10 and histidine 17 each bind ATP; that span reads SF. Lysine 41, threonine 73, and arginine 87 together coordinate substrate. Residues 88–90, glutamate 98, and 122–128 each bind ATP; these read GLR and NQNISSS.

Belongs to the bacterial CoaD family. As to quaternary structure, homohexamer. Mg(2+) is required as a cofactor.

Its subcellular location is the cytoplasm. The enzyme catalyses (R)-4'-phosphopantetheine + ATP + H(+) = 3'-dephospho-CoA + diphosphate. It participates in cofactor biosynthesis; coenzyme A biosynthesis; CoA from (R)-pantothenate: step 4/5. Functionally, reversibly transfers an adenylyl group from ATP to 4'-phosphopantetheine, yielding dephospho-CoA (dPCoA) and pyrophosphate. In Leuconostoc mesenteroides subsp. mesenteroides (strain ATCC 8293 / DSM 20343 / BCRC 11652 / CCM 1803 / JCM 6124 / NCDO 523 / NBRC 100496 / NCIMB 8023 / NCTC 12954 / NRRL B-1118 / 37Y), this protein is Phosphopantetheine adenylyltransferase.